A 245-amino-acid chain; its full sequence is 1-(5-phosphoribosyl)-5-[(5-phosphoribosylamino)methylideneamino] imidazole-4-carboxamide isomerase (245 aa).

The Proton acceptor role is filled by D7. The active-site Proton donor is the D129.

It belongs to the HisA/HisF family.

Its subcellular location is the cytoplasm. It carries out the reaction 1-(5-phospho-beta-D-ribosyl)-5-[(5-phospho-beta-D-ribosylamino)methylideneamino]imidazole-4-carboxamide = 5-[(5-phospho-1-deoxy-D-ribulos-1-ylimino)methylamino]-1-(5-phospho-beta-D-ribosyl)imidazole-4-carboxamide. The protein operates within amino-acid biosynthesis; L-histidine biosynthesis; L-histidine from 5-phospho-alpha-D-ribose 1-diphosphate: step 4/9. This Cronobacter sakazakii (strain ATCC BAA-894) (Enterobacter sakazakii) protein is 1-(5-phosphoribosyl)-5-[(5-phosphoribosylamino)methylideneamino] imidazole-4-carboxamide isomerase.